We begin with the raw amino-acid sequence, 475 residues long: Ankyrin repeat, SAM and basic leucine zipper domain-containing protein 1 (475 aa).

Residues 1 to 25 form a disordered region; sequence MAAGALRGLPVAGGGESSESEDDGW. Residues Ser17, Ser18, and Ser20 each carry the phosphoserine modification. 6 ANK repeats span residues 45 to 74, 78 to 107, 110 to 144, 148 to 177, 181 to 210, and 214 to 243; these read EKKE…SVDS, YGWT…NASF, DKQT…DPNV, RLMT…EVNT, NGYT…NKML, and DGKM…PLEG. The region spanning 272–334 is the SAM domain; the sequence is SYTAFGDLEV…KILAALKELQ (63 aa).

In terms of assembly, interacts with DDX4, PIWIL1, RANBP9 and TDRD1.

The protein localises to the cytoplasm. Functionally, plays a central role during spermatogenesis by repressing transposable elements and preventing their mobilization, which is essential for the germline integrity. Acts via the piRNA metabolic process, which mediates the repression of transposable elements during meiosis by forming complexes composed of piRNAs and Piwi proteins and governs the methylation and subsequent repression of transposons. Its association with pi-bodies suggests a participation in the primary piRNAs metabolic process. Required prior to the pachytene stage to facilitate the production of multiple types of piRNAs, including those associated with repeats involved in the regulation of retrotransposons. May act by mediating protein-protein interactions during germ cell maturation. In Chlorocebus aethiops (Green monkey), this protein is Ankyrin repeat, SAM and basic leucine zipper domain-containing protein 1 (ASZ1).